The chain runs to 105 residues: Large ribosomal subunit protein uL24 (105 aa).

This sequence belongs to the universal ribosomal protein uL24 family. In terms of assembly, part of the 50S ribosomal subunit.

Its function is as follows. One of two assembly initiator proteins, it binds directly to the 5'-end of the 23S rRNA, where it nucleates assembly of the 50S subunit. In terms of biological role, one of the proteins that surrounds the polypeptide exit tunnel on the outside of the subunit. This Sphingopyxis alaskensis (strain DSM 13593 / LMG 18877 / RB2256) (Sphingomonas alaskensis) protein is Large ribosomal subunit protein uL24.